A 264-amino-acid polypeptide reads, in one-letter code: Rhamnosyltransferase WbbL (264 aa).

It belongs to the glycosyltransferase 2 family.

It participates in bacterial outer membrane biogenesis; lipopolysaccharide biosynthesis. Its function is as follows. Rhamnosyltransferase involved in lipopolysaccharide biosynthesis. This Escherichia coli (strain K12) protein is Rhamnosyltransferase WbbL (wbbL).